Reading from the N-terminus, the 397-residue chain is Enoyl-[acyl-carrier-protein] reductase [NADH] (397 aa).

NAD(+) is bound by residues 48–53 (GASTGY), 74–75 (FE), 111–112 (DA), and 139–140 (VA). Y225 serves as a coordination point for substrate. Y235 (proton donor) is an active-site residue. NAD(+)-binding positions include K244 and 273–275 (VVT).

The protein belongs to the TER reductase family. As to quaternary structure, monomer.

It carries out the reaction a 2,3-saturated acyl-[ACP] + NAD(+) = a (2E)-enoyl-[ACP] + NADH + H(+). Its pathway is lipid metabolism; fatty acid biosynthesis. Involved in the final reduction of the elongation cycle of fatty acid synthesis (FAS II). Catalyzes the reduction of a carbon-carbon double bond in an enoyl moiety that is covalently linked to an acyl carrier protein (ACP). This Burkholderia pseudomallei (strain 1106a) protein is Enoyl-[acyl-carrier-protein] reductase [NADH].